Consider the following 158-residue polypeptide: Capsid protein (158 aa).

Ser2 carries the N-acetylserine; by host modification.

This sequence belongs to the virgaviridae capsid protein family.

It is found in the virion. Its function is as follows. Capsid protein self-assembles to form rod-shaped virions about 18 nm in diameter with a central canal enclosing the viral genomic RNA. The polypeptide is Capsid protein (CP) (Odontoglossum ringspot virus (isolate Japan) (ORSV)).